Reading from the N-terminus, the 422-residue chain is Glucose-1-phosphate adenylyltransferase (422 aa).

Alpha-D-glucose 1-phosphate-binding positions include tyrosine 110, glycine 175, 190-191, and serine 208; that span reads EK.

Belongs to the bacterial/plant glucose-1-phosphate adenylyltransferase family. Homotetramer.

The enzyme catalyses alpha-D-glucose 1-phosphate + ATP + H(+) = ADP-alpha-D-glucose + diphosphate. The protein operates within glycan biosynthesis; glycogen biosynthesis. Involved in the biosynthesis of ADP-glucose, a building block required for the elongation reactions to produce glycogen. Catalyzes the reaction between ATP and alpha-D-glucose 1-phosphate (G1P) to produce pyrophosphate and ADP-Glc. In Hydrogenovibrio crunogenus (strain DSM 25203 / XCL-2) (Thiomicrospira crunogena), this protein is Glucose-1-phosphate adenylyltransferase.